A 1404-amino-acid polypeptide reads, in one-letter code: DNA-directed RNA polymerase subunit beta' (1404 aa).

Positions 70, 72, 85, and 88 each coordinate Zn(2+). Positions 458, 460, and 462 each coordinate Mg(2+). The Zn(2+) site is built by C813, C887, C894, and C897. The segment at 1377 to 1404 is disordered; that stretch reads ERRAIAESEAAELEASQAETSDENAAAE.

This sequence belongs to the RNA polymerase beta' chain family. The RNAP catalytic core consists of 2 alpha, 1 beta, 1 beta' and 1 omega subunit. When a sigma factor is associated with the core the holoenzyme is formed, which can initiate transcription. The cofactor is Mg(2+). Zn(2+) serves as cofactor.

The enzyme catalyses RNA(n) + a ribonucleoside 5'-triphosphate = RNA(n+1) + diphosphate. Its function is as follows. DNA-dependent RNA polymerase catalyzes the transcription of DNA into RNA using the four ribonucleoside triphosphates as substrates. The sequence is that of DNA-directed RNA polymerase subunit beta' from Polaromonas naphthalenivorans (strain CJ2).